The following is a 38-amino-acid chain: Mu/omega-theraphotoxin-Mb1a (38 aa).

Cystine bridges form between cysteine 7–cysteine 21, cysteine 14–cysteine 26, and cysteine 20–cysteine 33. At threonine 38 the chain carries Threonine amide.

The protein belongs to the neurotoxin 10 (Hwtx-1) family. 28 (Jztx-11) subfamily. Expressed by the venom gland.

The protein localises to the secreted. Paralytic toxin that inhibits insect voltage-gated sodium (Nav) and calcium (Cav) channels in P.americana (American cockroach) dorsal unpaired median (DUM) neurons, and inhibits the B.germanica (German cockroach) Nav channel (BgNaV1). Also shows a delay in fast inactivation when tested on BgNaV1. May act as a gating-modifier toxin on Nav and as a pore blocker on Cav. In vivo, reversibly paralyzes both L.cuprina (Australian sheep blowfly) and M.domestica (housefly), but does not affect larvae of H.armigera (cotton bollworms). The protein is Mu/omega-theraphotoxin-Mb1a of Monocentropus balfouri (Socotra Island blue baboon tarantula).